The chain runs to 103 residues: MAAVSLSVSTVKPLGDRVFVKVSESEEKTAGGILLPDTAKEKPQVGEVVQVGPGKRNDDGSRQAPEVGVGDNVLYSKYAGTDIKLGSDEYVLLSEKDILAVVN.

Belongs to the GroES chaperonin family. In terms of assembly, heptamer of 7 subunits arranged in a ring. Interacts with the chaperonin GroEL.

It localises to the cytoplasm. Functionally, together with the chaperonin GroEL, plays an essential role in assisting protein folding. The GroEL-GroES system forms a nano-cage that allows encapsulation of the non-native substrate proteins and provides a physical environment optimized to promote and accelerate protein folding. GroES binds to the apical surface of the GroEL ring, thereby capping the opening of the GroEL channel. The chain is Co-chaperonin GroES from Synechococcus sp. (strain CC9605).